Consider the following 331-residue polypeptide: Peroxidase 49 (331 aa).

Positions 1-22 are cleaved as a signal peptide; sequence MARLTSFLLLLSLICFVPLCLC. 4 disulfide bridges follow: C39–C119, C72–C77, C125–C326, and C204–C236. H70 (proton acceptor) is an active-site residue. Ca(2+)-binding residues include D71, V74, G76, D78, and S80. Residue P167 participates in substrate binding. Residue N170 is glycosylated (N-linked (GlcNAc...) asparagine). H197 contributes to the heme b binding site. Position 198 (T198) interacts with Ca(2+). N213 carries N-linked (GlcNAc...) asparagine glycosylation. Positions 249, 252, and 257 each coordinate Ca(2+).

It belongs to the peroxidase family. Classical plant (class III) peroxidase subfamily. The cofactor is heme b. Ca(2+) is required as a cofactor.

It localises to the secreted. It catalyses the reaction 2 a phenolic donor + H2O2 = 2 a phenolic radical donor + 2 H2O. In terms of biological role, removal of H(2)O(2), oxidation of toxic reductants, biosynthesis and degradation of lignin, suberization, auxin catabolism, response to environmental stresses such as wounding, pathogen attack and oxidative stress. These functions might be dependent on each isozyme/isoform in each plant tissue. This chain is Peroxidase 49 (PER49), found in Arabidopsis thaliana (Mouse-ear cress).